The primary structure comprises 494 residues: Ketol-acid reductoisomerase (NADP(+)) (494 aa).

The KARI N-terminal Rossmann domain maps to 14–208 (LDQLGRCRFM…GGHRAGCLES (195 aa)). Residues 45-48 (CGAQ), Arg-68, Arg-76, Ser-78, and 108-110 (DKQ) each bind NADP(+). The active site involves His-132. Gly-158 is an NADP(+) binding site. KARI C-terminal knotted domains follow at residues 209–344 (SFVA…NYPE) and 345–487 (SDVE…MSDM). Asp-217, Glu-221, Glu-389, and Glu-393 together coordinate Mg(2+). Ser-414 is a substrate binding site.

Belongs to the ketol-acid reductoisomerase family. Requires Mg(2+) as cofactor.

The catalysed reaction is (2R)-2,3-dihydroxy-3-methylbutanoate + NADP(+) = (2S)-2-acetolactate + NADPH + H(+). The enzyme catalyses (2R,3R)-2,3-dihydroxy-3-methylpentanoate + NADP(+) = (S)-2-ethyl-2-hydroxy-3-oxobutanoate + NADPH + H(+). The protein operates within amino-acid biosynthesis; L-isoleucine biosynthesis; L-isoleucine from 2-oxobutanoate: step 2/4. It functions in the pathway amino-acid biosynthesis; L-valine biosynthesis; L-valine from pyruvate: step 2/4. Its function is as follows. Involved in the biosynthesis of branched-chain amino acids (BCAA). Catalyzes an alkyl-migration followed by a ketol-acid reduction of (S)-2-acetolactate (S2AL) to yield (R)-2,3-dihydroxy-isovalerate. In the isomerase reaction, S2AL is rearranged via a Mg-dependent methyl migration to produce 3-hydroxy-3-methyl-2-ketobutyrate (HMKB). In the reductase reaction, this 2-ketoacid undergoes a metal-dependent reduction by NADPH to yield (R)-2,3-dihydroxy-isovalerate. The polypeptide is Ketol-acid reductoisomerase (NADP(+)) (Aliivibrio fischeri (strain ATCC 700601 / ES114) (Vibrio fischeri)).